The sequence spans 273 residues: SPRY domain-containing SOCS box protein 1 (273 aa).

A Phosphotyrosine modification is found at tyrosine 31. The B30.2/SPRY domain maps to 33 to 231 (KPTRLDLLLD…IRMRYLNGLD (199 aa)). The SOCS box domain occupies 232 to 273 (PEPLPLMDLCRRSVRLALGKGRLGEIHALPLPASLKAYLLYQ).

It belongs to the SPSB family. Component of the probable ECS(SPSB1) E3 ubiquitin-protein ligase complex which contains CUL5, RNF7/RBX2, Elongin BC complex and SPSB1. Interacts with CUL5, RNF7, ELOB and ELOC. Directly interacts with MET tyrosine kinase domain in the presence and in the absence of HGF, however HGF treatment has a positive effect on this interaction. When phosphorylated, interacts with RASA1 without affecting its stability. Interacts (via B30.2/SPRY domain) with PAWR; this interaction is direct and occurs in association with the Elongin BC complex. Interacts with NOS2 and EPHB2.

The protein resides in the cytoplasm. It localises to the cytosol. It functions in the pathway protein modification; protein ubiquitination. Its function is as follows. Substrate recognition component of a SCF-like ECS (Elongin BC-CUL2/5-SOCS-box protein) E3 ubiquitin-protein ligase complex which mediates the ubiquitination and subsequent proteasomal degradation of target proteins. Negatively regulates nitric oxide (NO) production and limits cellular toxicity in activated macrophages by mediating the ubiquitination and proteasomal degradation of NOS2. Acts as a bridge which links NOS2 with the ECS E3 ubiquitin ligase complex components ELOC and CUL5. The protein is SPRY domain-containing SOCS box protein 1 (SPSB1) of Bos taurus (Bovine).